A 308-amino-acid polypeptide reads, in one-letter code: Oxygen-dependent coproporphyrinogen-III oxidase (308 aa).

Substrate is bound at residue S97. H101 and H111 together coordinate a divalent metal cation. H111 acts as the Proton donor in catalysis. 113–115 lines the substrate pocket; that stretch reads NVR. The a divalent metal cation site is built by H153 and H183. Residues 248 to 283 are important for dimerization; it reads YVEFNLVWDRGTHFGLQSGGRTESILMSMPPLASWS. 266–268 contacts substrate; the sequence is GGR.

It belongs to the aerobic coproporphyrinogen-III oxidase family. In terms of assembly, homodimer. A divalent metal cation serves as cofactor.

The protein localises to the cytoplasm. It carries out the reaction coproporphyrinogen III + O2 + 2 H(+) = protoporphyrinogen IX + 2 CO2 + 2 H2O. It participates in porphyrin-containing compound metabolism; protoporphyrin-IX biosynthesis; protoporphyrinogen-IX from coproporphyrinogen-III (O2 route): step 1/1. Functionally, involved in the heme biosynthesis. Catalyzes the aerobic oxidative decarboxylation of propionate groups of rings A and B of coproporphyrinogen-III to yield the vinyl groups in protoporphyrinogen-IX. The sequence is that of Oxygen-dependent coproporphyrinogen-III oxidase from Polaromonas sp. (strain JS666 / ATCC BAA-500).